Here is a 198-residue protein sequence, read N- to C-terminus: Nucleoside triphosphate pyrophosphatase (198 aa).

Catalysis depends on Asp-70, which acts as the Proton acceptor.

The protein belongs to the Maf family. The cofactor is a divalent metal cation.

Its subcellular location is the cytoplasm. It carries out the reaction a ribonucleoside 5'-triphosphate + H2O = a ribonucleoside 5'-phosphate + diphosphate + H(+). The catalysed reaction is a 2'-deoxyribonucleoside 5'-triphosphate + H2O = a 2'-deoxyribonucleoside 5'-phosphate + diphosphate + H(+). Functionally, nucleoside triphosphate pyrophosphatase. May have a dual role in cell division arrest and in preventing the incorporation of modified nucleotides into cellular nucleic acids. The chain is Nucleoside triphosphate pyrophosphatase from Thermosynechococcus vestitus (strain NIES-2133 / IAM M-273 / BP-1).